Here is a 123-residue protein sequence, read N- to C-terminus: Large ribosomal subunit protein uL18 (123 aa).

Belongs to the universal ribosomal protein uL18 family. In terms of assembly, part of the 50S ribosomal subunit; part of the 5S rRNA/L5/L18/L25 subcomplex. Contacts the 5S and 23S rRNAs.

In terms of biological role, this is one of the proteins that bind and probably mediate the attachment of the 5S RNA into the large ribosomal subunit, where it forms part of the central protuberance. This chain is Large ribosomal subunit protein uL18, found in Bifidobacterium adolescentis (strain ATCC 15703 / DSM 20083 / NCTC 11814 / E194a).